Consider the following 239-residue polypeptide: Ribosomal RNA small subunit methyltransferase G (239 aa).

S-adenosyl-L-methionine contacts are provided by residues G76, F81, 99-101 (DSS), 128-129 (IE), and R147.

It belongs to the methyltransferase superfamily. RNA methyltransferase RsmG family.

The protein resides in the cytoplasm. Functionally, specifically methylates the N7 position of a guanine in 16S rRNA. In Prochlorococcus marinus subsp. pastoris (strain CCMP1986 / NIES-2087 / MED4), this protein is Ribosomal RNA small subunit methyltransferase G.